Here is a 273-residue protein sequence, read N- to C-terminus: Pantothenate synthetase (273 aa).

Position 27–34 (27–34) interacts with ATP; that stretch reads MGALHNGH. His34 (proton donor) is an active-site residue. Gln58 is a (R)-pantoate binding site. Gln58 serves as a coordination point for beta-alanine. ATP is bound at residue 144 to 147; that stretch reads GKKD. Gln150 contacts (R)-pantoate. Residues Val173 and 181–184 each bind ATP; that span reads LSSR.

It belongs to the pantothenate synthetase family. As to quaternary structure, homodimer.

The protein resides in the cytoplasm. The catalysed reaction is (R)-pantoate + beta-alanine + ATP = (R)-pantothenate + AMP + diphosphate + H(+). The protein operates within cofactor biosynthesis; (R)-pantothenate biosynthesis; (R)-pantothenate from (R)-pantoate and beta-alanine: step 1/1. In terms of biological role, catalyzes the condensation of pantoate with beta-alanine in an ATP-dependent reaction via a pantoyl-adenylate intermediate. The chain is Pantothenate synthetase from Campylobacter fetus subsp. fetus (strain 82-40).